Reading from the N-terminus, the 367-residue chain is Heparan sulfate glucosamine 3-O-sulfotransferase 2 (367 aa).

At 1-19 (MAYRVLGRAGPPQPRRARR) the chain is on the cytoplasmic side. A helical; Signal-anchor for type II membrane protein membrane pass occupies residues 20–39 (LLFAFTLSLSCTYLCYSFLC). The Lumenal portion of the chain corresponds to 40-367 (CCDGLGQSRL…ETVGQDFRWE (328 aa)). Residues 66-115 (LLAKSRPCDPPGPTPSEPSAPSAPAAAAPAPRLSGSNHSGSPKPGTKRLP) form a disordered region. Pro residues predominate over residues 73–83 (CDPPGPTPSEP). The segment covering 84 to 96 (SAPSAPAAAAPAP) has biased composition (low complexity). Residue Asn102 is glycosylated (N-linked (GlcNAc...) asparagine). 124 to 128 (KGGTR) provides a ligand contact to 3'-phosphoadenylyl sulfate. Residues 146 to 152 (EPHFFDR) and 177 to 180 (KTPS) each bind substrate. Asn193 carries N-linked (GlcNAc...) asparagine glycosylation. The 3'-phosphoadenylyl sulfate site is built by Arg205 and Ser213. N-linked (GlcNAc...) asparagine glycosylation is present at Asn235. 245-246 (WN) contributes to the substrate binding site. A glycan (N-linked (GlcNAc...) asparagine) is linked at Asn306. A disulfide bond links Cys313 and Cys325. 330 to 334 (KGRTH) lines the 3'-phosphoadenylyl sulfate pocket.

Belongs to the sulfotransferase 1 family.

The protein localises to the golgi apparatus membrane. The catalysed reaction is alpha-D-glucosaminyl-[heparan sulfate](n) + 3'-phosphoadenylyl sulfate = 3-sulfo-alpha-D-glucosaminyl-[heparan sulfate](n) + adenosine 3',5'-bisphosphate + H(+). Sulfotransferase that utilizes 3'-phospho-5'-adenylyl sulfate (PAPS) to catalyze the transfer of a sulfo group to an N-unsubstituted glucosamine linked to a 2-O-sulfo iduronic acid unit on heparan sulfate. Catalyzes the O-sulfation of glucosamine in GlcA2S-GlcNS. Unlike HS3ST1/3-OST-1, does not convert non-anticoagulant heparan sulfate to anticoagulant heparan sulfate. In Mus musculus (Mouse), this protein is Heparan sulfate glucosamine 3-O-sulfotransferase 2 (Hs3st2).